The following is a 543-amino-acid chain: Chaperonin GroEL (543 aa).

Residues 30-33 (TLGP), Lys-51, 87-91 (DGTTT), Gly-415, and Asp-496 contribute to the ATP site.

This sequence belongs to the chaperonin (HSP60) family. In terms of assembly, forms a cylinder of 14 subunits composed of two heptameric rings stacked back-to-back. Interacts with the co-chaperonin GroES.

It localises to the cytoplasm. The catalysed reaction is ATP + H2O + a folded polypeptide = ADP + phosphate + an unfolded polypeptide.. Its function is as follows. Together with its co-chaperonin GroES, plays an essential role in assisting protein folding. The GroEL-GroES system forms a nano-cage that allows encapsulation of the non-native substrate proteins and provides a physical environment optimized to promote and accelerate protein folding. The protein is Chaperonin GroEL of Gluconobacter oxydans (strain 621H) (Gluconobacter suboxydans).